A 382-amino-acid polypeptide reads, in one-letter code: MPQRHPQPAHPADGIYFGLMSGTSMDGVDGVAVRFETGHAPVVLAEAFVGFAQSLRDALFALQQPGDDEIDRESLAANALVARYAVCCHELQRTAGLSRDEIRAIGVHGQTVRHRPERGYTRQLNNPALLAELTQVDVIADFRSRDVAAGGHGAPLAPAFHATVFGAPGETRVVCNLGGISNITILPGEGGDVRGFDCGPANALLDEWATRHLGKPYDDGGKFAARGTVHAPLLDALLDEPYFAAAPPKSTGRDLFNPGWLDAKLAAFVQVAPQDVQATLTALTAVSVAREVATHASGCKALFVCGGGARNPVLLDALRHALHEAGVLASVDTTAALGVPPQQVEALAFAWLAYRFTGREPGNLATVTGAAGNRVLGALYPR.

Glycine 22–aspartate 29 serves as a coordination point for ATP.

It belongs to the anhydro-N-acetylmuramic acid kinase family.

It catalyses the reaction 1,6-anhydro-N-acetyl-beta-muramate + ATP + H2O = N-acetyl-D-muramate 6-phosphate + ADP + H(+). It participates in amino-sugar metabolism; 1,6-anhydro-N-acetylmuramate degradation. It functions in the pathway cell wall biogenesis; peptidoglycan recycling. Its function is as follows. Catalyzes the specific phosphorylation of 1,6-anhydro-N-acetylmuramic acid (anhMurNAc) with the simultaneous cleavage of the 1,6-anhydro ring, generating MurNAc-6-P. Is required for the utilization of anhMurNAc either imported from the medium or derived from its own cell wall murein, and thus plays a role in cell wall recycling. This is Anhydro-N-acetylmuramic acid kinase from Burkholderia ambifaria (strain ATCC BAA-244 / DSM 16087 / CCUG 44356 / LMG 19182 / AMMD) (Burkholderia cepacia (strain AMMD)).